Here is a 339-residue protein sequence, read N- to C-terminus: 5-dehydro-2-deoxygluconokinase (339 aa).

This sequence belongs to the carbohydrate kinase PfkB family.

The catalysed reaction is 5-dehydro-2-deoxy-D-gluconate + ATP = 6-phospho-5-dehydro-2-deoxy-D-gluconate + ADP + H(+). The protein operates within polyol metabolism; myo-inositol degradation into acetyl-CoA; acetyl-CoA from myo-inositol: step 5/7. Functionally, catalyzes the phosphorylation of 5-dehydro-2-deoxy-D-gluconate (2-deoxy-5-keto-D-gluconate or DKG) to 6-phospho-5-dehydro-2-deoxy-D-gluconate (DKGP). This chain is 5-dehydro-2-deoxygluconokinase, found in Clostridium tetani (strain Massachusetts / E88).